A 751-amino-acid polypeptide reads, in one-letter code: C2 domain-containing protein At1g53590 (751 aa).

Transmembrane regions (helical) follow at residues 2–22 (ESSL…ISSL) and 26–46 (HAFF…RYVM). The SMP-LTD domain occupies 68–262 (DSESVRWMNY…QPNMLVVDME (195 aa)). Residues 267–381 (PTSENWFFVD…RGGQRNDMWL (115 aa)) form the C2 domain. Asp-298, Asp-304, Asp-352, Asp-354, and Asp-359 together coordinate Ca(2+). Disordered regions lie at residues 469 to 519 (QIWE…GRGL) and 572 to 751 (SGPL…SSSK). Residues 472–482 (EPRKGKSRRLD) show a composition bias toward basic and acidic residues. Polar residues predominate over residues 483-502 (SQIQRTPNDESLSNGSSSTD). Basic and acidic residues predominate over residues 590-611 (NSGKGHMKDVAKSFLKQAEKSA). Residues 612 to 624 (KQIKHAFSRKGSM) are compositionally biased toward basic residues. Positions 625–634 (KPRDGHKEIV) are enriched in basic and acidic residues. A compositionally biased stretch (acidic residues) spans 639 to 651 (SGTDSESSDDDDA). 2 stretches are compositionally biased toward basic and acidic residues: residues 664 to 681 (KLTR…DHVD) and 703 to 751 (VEAK…SSSK). Residues 701-728 (TDVEAKEEKLKEAAESETRDMDTAMNIK) are a coiled coil.

It belongs to the extended synaptotagmin family. The cofactor is Ca(2+).

It is found in the membrane. The polypeptide is C2 domain-containing protein At1g53590 (NTMC2T6.1) (Arabidopsis thaliana (Mouse-ear cress)).